Here is a 200-residue protein sequence, read N- to C-terminus: Imidazole glycerol phosphate synthase subunit HisH (200 aa).

One can recognise a Glutamine amidotransferase type-1 domain in the interval 3–200 (DLALIDAGGA…LRNFLEMSFP (198 aa)). Catalysis depends on Cys78, which acts as the Nucleophile. Catalysis depends on residues His179 and Glu181.

As to quaternary structure, heterodimer of HisH and HisF.

The protein resides in the cytoplasm. It carries out the reaction 5-[(5-phospho-1-deoxy-D-ribulos-1-ylimino)methylamino]-1-(5-phospho-beta-D-ribosyl)imidazole-4-carboxamide + L-glutamine = D-erythro-1-(imidazol-4-yl)glycerol 3-phosphate + 5-amino-1-(5-phospho-beta-D-ribosyl)imidazole-4-carboxamide + L-glutamate + H(+). The enzyme catalyses L-glutamine + H2O = L-glutamate + NH4(+). Its pathway is amino-acid biosynthesis; L-histidine biosynthesis; L-histidine from 5-phospho-alpha-D-ribose 1-diphosphate: step 5/9. Functionally, IGPS catalyzes the conversion of PRFAR and glutamine to IGP, AICAR and glutamate. The HisH subunit catalyzes the hydrolysis of glutamine to glutamate and ammonia as part of the synthesis of IGP and AICAR. The resulting ammonia molecule is channeled to the active site of HisF. This chain is Imidazole glycerol phosphate synthase subunit HisH, found in Xanthomonas campestris pv. campestris (strain 8004).